The chain runs to 418 residues: MNPIQSFHCKLRSLATVLDGETARLLRALDGEDSDFEDSSARILCDLYSEVQTLKDDVNAHLDKARLESRESTHFIKAAKVLMKKNSADIIKLREFFQKYGYQARDKEDSACEHRVSNSSPGLAVCKDTQEPGVKQELSEPRVPRGSAPEEPLRSPQLSDFGLQRYMVSQGPANPRQETVSLKEDRASETTPAKDPSVQVLKTPRCALKMDDFECVTPKLEHFGISEYTMCLNEDYTMGLKNMKSIKSSPLSGVGGEAVETGPVTSDNSFAIPGPMIQQLEKNDVEYINSPLPPKFCTPGLKIPSSMDSTDLVSIDYPLSKPNSSPTDLEDKDCAPLILNSDECYQSFADPHSPTITSYENFTTPSPPKVTAIPEDILQMLKYNSNLASPIDVKAMPLRRGFTSKGQSTRGAANKENW.

6 positions are modified to phosphoserine: Ser34, Ser119, Ser120, Ser139, Ser155, and Ser159. The binds the NDC80 complex stretch occupies residues 102–417 (YQARDKEDSA…STRGAANKEN (316 aa)). A disordered region spans residues 111–157 (ACEHRVSNSSPGLAVCKDTQEPGVKQELSEPRVPRGSAPEEPLRSPQ). The disordered stretch occupies residues 170–198 (QGPANPRQETVSLKEDRASETTPAKDPSV). Phosphothreonine is present on residues Thr190 and Thr217. The binds microtubules and contacts the microtubule-binding domain of SKA1 stretch occupies residues 196–417 (PSVQVLKTPR…STRGAANKEN (222 aa)). The residue at position 290 (Ser290) is a Phosphoserine. A Phosphothreonine modification is found at Thr298. 2 positions are modified to phosphoserine: Ser325 and Ser353. Residues 350 to 417 (DPHSPTITSY…STRGAANKEN (68 aa)) form a required for localization to kinetochores region. A Phosphothreonine modification is found at Thr364.

The protein belongs to the SKA3 family. In terms of assembly, component of the SKA complex, composed of SKA1, SKA2 and SKA3. The SKA complex is a homodimer organized around a central W-shaped coiled-coil structure, formed by the interacting domains of SKA1, SKA2, and SKA3, each end of the 'W' is extended further by the C-terminal microtubule-binding domains of SKA1 and SKA3; the complex forms extended structures on microtubules. Interacts with the NDC80-NUF2 heterodimer of the NDC80 complex (via coiled coils); the interaction localizes the SKA complex to the kinetochore and is required to establish kinetochore-microtubule end-on attachments. Interacts with polo-like kinase PLK1.

The protein resides in the cytoplasm. The protein localises to the cytoskeleton. It is found in the spindle. It localises to the chromosome. Its subcellular location is the centromere. The protein resides in the kinetochore. The protein localises to the microtubule organizing center. It is found in the centrosome. Component of the SKA complex, a microtubule plus end-binding complex of the outer kinetochore that stabilizes spindle microtubule-kinetochore attachments, promotes alignment of chromosomes at the mitotic spindle equator (chromosome congression) and assists suppression of the spindle assembly checkpoint. Kinetochores, consisting of a centromere-associated inner segment and a microtubule-contacting outer segment, play a crucial role in chromosome segregation by mediating the physical connection between centromeric DNA and spindle microtubules. The outer kinetochore is made up of the ten-subunit KMN network complex, comprising the MIS12, NDC80 and KNL1 complexes, and auxiliary microtubule-associated components such as the SKA complex; together they connect the outer kinetochore with the inner kinetochore, bind microtubules, and mediate interactions with mitotic checkpoint proteins that delay anaphase until chromosomes are bioriented on the spindle. The SKA complex is loaded onto bioriented kinetochores and it facilitates chromosome congression by stabilizing microtubules together with MAPRE1, and end-on attachment of the NDC80 complex to depolymerizing spindle microtubules, thereby assisting the poleward-moving kinetochore in withstanding microtubule pulling forces. The complex associates with dynamic microtubule plus-ends and can track both depolymerizing and elongating microtubules. The complex recruits protein phosphatase 1 (PP1) to the kinetochore in prometaphase and metaphase, to oppose spindle assembly checkpoint signaling and promote the onset of anaphase. Within the complex, binds microtubules but with a much lower affinity than SKA1. Promotes stability of the polo-like kinase PLK1 protein. During meiosis the SKA complex stabilizes the meiotic spindle and is required for its migration to the cortex. This is SKA complex subunit 3 (Ska3) from Rattus norvegicus (Rat).